Consider the following 112-residue polypeptide: Prothymosin alpha (112 aa).

M1 carries the N-acetylmethionine modification. The interval 1–112 is disordered; it reads MSDAAVDTSS…KKQKKTDEDD (112 aa). S2 is modified (N-acetylserine; in Prothymosin alpha, N-terminally processed). S2 bears the Phosphoserine mark. At T8 the chain carries Phosphothreonine. Phosphoserine is present on residues S9 and S10. T13 and T14 each carry phosphothreonine. Residues 13–31 are compositionally biased toward basic and acidic residues; that stretch reads TTKDLKEKKEVVEEAENGR. K15 is subject to N6-acetyllysine; alternate. N6-succinyllysine; alternate is present on K15. Over residues 43 to 84 the composition is skewed to acidic residues; the sequence is ENGEQEADNEVDEEEEEGGEEEEEEEEGDGEEEDGDEDEEAE. Over residues 101 to 112 the composition is skewed to basic and acidic residues; sequence ETKKQKKTDEDD. The residue at position 102 (T102) is a Phosphothreonine. Position 103 is an N6-acetyllysine; alternate (K103). K103 participates in a covalent cross-link: Glycyl lysine isopeptide (Lys-Gly) (interchain with G-Cter in SUMO2); alternate. Phosphothreonine is present on T108.

This sequence belongs to the pro/parathymosin family. As to quaternary structure, interacts with NUPR1; regulates apoptotic process. Covalently linked to a small RNA of about 20 nucleotides.

The protein localises to the nucleus. Functionally, prothymosin alpha may mediate immune function by conferring resistance to certain opportunistic infections. The polypeptide is Prothymosin alpha (Ptma) (Rattus norvegicus (Rat)).